A 539-amino-acid polypeptide reads, in one-letter code: Eukaryotic translation initiation factor 3 subunit L (539 aa).

The PCI domain maps to 306 to 514 (TFSDILLYIQ…IHIADTKVSH (209 aa)).

Belongs to the eIF-3 subunit L family. In terms of assembly, component of the eukaryotic translation initiation factor 3 (eIF-3) complex. The eIF-3 complex interacts with pix.

The protein localises to the cytoplasm. Functionally, component of the eukaryotic translation initiation factor 3 (eIF-3) complex, which is involved in protein synthesis of a specialized repertoire of mRNAs and, together with other initiation factors, stimulates binding of mRNA and methionyl-tRNAi to the 40S ribosome. The eIF-3 complex specifically targets and initiates translation of a subset of mRNAs involved in cell proliferation. The chain is Eukaryotic translation initiation factor 3 subunit L from Drosophila yakuba (Fruit fly).